Consider the following 399-residue polypeptide: Tryptophan synthase beta chain (399 aa).

Lysine 90 carries the post-translational modification N6-(pyridoxal phosphate)lysine.

Belongs to the TrpB family. Tetramer of two alpha and two beta chains. It depends on pyridoxal 5'-phosphate as a cofactor.

The catalysed reaction is (1S,2R)-1-C-(indol-3-yl)glycerol 3-phosphate + L-serine = D-glyceraldehyde 3-phosphate + L-tryptophan + H2O. Its pathway is amino-acid biosynthesis; L-tryptophan biosynthesis; L-tryptophan from chorismate: step 5/5. Functionally, the beta subunit is responsible for the synthesis of L-tryptophan from indole and L-serine. In Bacillus pumilus (strain SAFR-032), this protein is Tryptophan synthase beta chain.